The primary structure comprises 458 residues: Methylenetetrahydrofolate--tRNA-(uracil-5-)-methyltransferase TrmFO (458 aa).

Residue 12–17 (GAGLAG) coordinates FAD.

Belongs to the MnmG family. TrmFO subfamily. Requires FAD as cofactor.

Its subcellular location is the cytoplasm. It catalyses the reaction uridine(54) in tRNA + (6R)-5,10-methylene-5,6,7,8-tetrahydrofolate + NADH + H(+) = 5-methyluridine(54) in tRNA + (6S)-5,6,7,8-tetrahydrofolate + NAD(+). The enzyme catalyses uridine(54) in tRNA + (6R)-5,10-methylene-5,6,7,8-tetrahydrofolate + NADPH + H(+) = 5-methyluridine(54) in tRNA + (6S)-5,6,7,8-tetrahydrofolate + NADP(+). In terms of biological role, catalyzes the folate-dependent formation of 5-methyl-uridine at position 54 (M-5-U54) in all tRNAs. This chain is Methylenetetrahydrofolate--tRNA-(uracil-5-)-methyltransferase TrmFO, found in Deinococcus geothermalis (strain DSM 11300 / CIP 105573 / AG-3a).